The sequence spans 1072 residues: DNA-directed RNA polymerase subunit beta (1072 aa).

Belongs to the RNA polymerase beta chain family. In terms of assembly, in plastids the minimal PEP RNA polymerase catalytic core is composed of four subunits: alpha, beta, beta', and beta''. When a (nuclear-encoded) sigma factor is associated with the core the holoenzyme is formed, which can initiate transcription.

It localises to the plastid. Its subcellular location is the chloroplast. It carries out the reaction RNA(n) + a ribonucleoside 5'-triphosphate = RNA(n+1) + diphosphate. Its function is as follows. DNA-dependent RNA polymerase catalyzes the transcription of DNA into RNA using the four ribonucleoside triphosphates as substrates. This chain is DNA-directed RNA polymerase subunit beta, found in Eucalyptus globulus subsp. globulus (Tasmanian blue gum).